A 379-amino-acid chain; its full sequence is DNA replication and repair protein RecF (379 aa).

34 to 41 is a binding site for ATP; sequence GDNGAGKT.

The protein belongs to the RecF family.

It localises to the cytoplasm. Functionally, the RecF protein is involved in DNA metabolism; it is required for DNA replication and normal SOS inducibility. RecF binds preferentially to single-stranded, linear DNA. It also seems to bind ATP. The protein is DNA replication and repair protein RecF of Mesorhizobium japonicum (strain LMG 29417 / CECT 9101 / MAFF 303099) (Mesorhizobium loti (strain MAFF 303099)).